Reading from the N-terminus, the 288-residue chain is Diaminopimelate epimerase (288 aa).

Substrate-binding residues include N14 and N67. C76 acts as the Proton donor in catalysis. Substrate-binding positions include 77-78, N166, N199, and 217-218; these read GN and ER. The Proton acceptor role is filled by C226. 227 to 228 is a binding site for substrate; it reads GT.

This sequence belongs to the diaminopimelate epimerase family. Homodimer.

It is found in the cytoplasm. The catalysed reaction is (2S,6S)-2,6-diaminopimelate = meso-2,6-diaminopimelate. Its pathway is amino-acid biosynthesis; L-lysine biosynthesis via DAP pathway; DL-2,6-diaminopimelate from LL-2,6-diaminopimelate: step 1/1. Its function is as follows. Catalyzes the stereoinversion of LL-2,6-diaminopimelate (L,L-DAP) to meso-diaminopimelate (meso-DAP), a precursor of L-lysine and an essential component of the bacterial peptidoglycan. This is Diaminopimelate epimerase from Bacillus cereus (strain B4264).